A 929-amino-acid chain; its full sequence is Protocadherin gamma-B3 (929 aa).

The signal sequence occupies residues Met1 to Ser30. 6 Cadherin domains span residues Glu31 to Phe133, Ser134 to Phe242, Thr243 to Ile347, Thr348 to Phe452, His453 to Val562, and Glu570 to Leu675. Residues Glu31–His691 are Extracellular-facing. Residue Asn136 is glycosylated (N-linked (GlcNAc...) asparagine). 2 N-linked (GlcNAc...) asparagine glycosylation sites follow: Asn419 and Asn545. The helical transmembrane segment at Leu692–Ser712 threads the bilayer. At Leu713–Lys929 the chain is on the cytoplasmic side. 2 disordered regions span residues Asn791 to Asn838 and Ala899 to Lys929. The segment covering Asn919–Lys929 has biased composition (basic residues).

The protein resides in the cell membrane. Functionally, potential calcium-dependent cell-adhesion protein. May be involved in the establishment and maintenance of specific neuronal connections in the brain. The polypeptide is Protocadherin gamma-B3 (PCDHGB3) (Homo sapiens (Human)).